The following is a 726-amino-acid chain: Fatty acid oxidation complex subunit alpha (726 aa).

The enoyl-CoA hydratase/isomerase stretch occupies residues 1–189 (MIYQGENLSV…KIGMVDGIVS (189 aa)). A substrate-binding site is contributed by aspartate 296. Residues 311–726 (EPVKNAAVLG…PKSSVSSPSV (416 aa)) are 3-hydroxyacyl-CoA dehydrogenase. NAD(+) contacts are provided by residues methionine 324, aspartate 343, 400–402 (VVE), lysine 407, and serine 429. The active-site For 3-hydroxyacyl-CoA dehydrogenase activity is histidine 450. Asparagine 453 contributes to the NAD(+) binding site. Residues asparagine 500 and tyrosine 660 each contribute to the substrate site.

In the N-terminal section; belongs to the enoyl-CoA hydratase/isomerase family. The protein in the C-terminal section; belongs to the 3-hydroxyacyl-CoA dehydrogenase family. As to quaternary structure, heterotetramer of two alpha chains (FadB) and two beta chains (FadA).

The enzyme catalyses a (3S)-3-hydroxyacyl-CoA + NAD(+) = a 3-oxoacyl-CoA + NADH + H(+). It catalyses the reaction a (3S)-3-hydroxyacyl-CoA = a (2E)-enoyl-CoA + H2O. It carries out the reaction a 4-saturated-(3S)-3-hydroxyacyl-CoA = a (3E)-enoyl-CoA + H2O. The catalysed reaction is (3S)-3-hydroxybutanoyl-CoA = (3R)-3-hydroxybutanoyl-CoA. The enzyme catalyses a (3Z)-enoyl-CoA = a 4-saturated (2E)-enoyl-CoA. It catalyses the reaction a (3E)-enoyl-CoA = a 4-saturated (2E)-enoyl-CoA. It participates in lipid metabolism; fatty acid beta-oxidation. Its function is as follows. Involved in the aerobic and anaerobic degradation of long-chain fatty acids via beta-oxidation cycle. Catalyzes the formation of 3-oxoacyl-CoA from enoyl-CoA via L-3-hydroxyacyl-CoA. It can also use D-3-hydroxyacyl-CoA and cis-3-enoyl-CoA as substrate. In Aliivibrio salmonicida (strain LFI1238) (Vibrio salmonicida (strain LFI1238)), this protein is Fatty acid oxidation complex subunit alpha.